The following is a 301-amino-acid chain: Peptidyl-prolyl isomerase CWC27 (301 aa).

Residues threonine 9–isoleucine 159 form the PPIase cyclophilin-type domain. The disordered stretch occupies residues threonine 251 to glutamate 280.

It belongs to the cyclophilin-type PPIase family. CWC27 subfamily. Belongs to the CWC complex (or CEF1-associated complex), a spliceosome subcomplex composed of the U2, U5 and U6 snRNAs and at least BUD13, BUD31, BRR2, CDC40, CEF1, CLF1, CUS1, CWC2, CWC15, CWC21, CWC22, CWC23, CWC24, CWC25, CWC27, ECM2, HSH155, IST3, ISY1, LEA1, MSL1, NTC20, PRP8, PRP9, PRP11, PRP19, PRP21, PRP22, PRP45, PRP46, SLU7, SMB1, SMD1, SMD2, SMD3, SMX2, SMX3, SNT309, SNU114, SPP2, SYF1, SYF2, RSE1 and YJU2.

Its subcellular location is the cytoplasm. The protein resides in the nucleus. It carries out the reaction [protein]-peptidylproline (omega=180) = [protein]-peptidylproline (omega=0). PPIases accelerate the folding of proteins. Catalyzes the cis-trans isomerization of proline imidic peptide bonds in oligopeptides. Involved in pre-mRNA splicing. The protein is Peptidyl-prolyl isomerase CWC27 (CWC27) of Saccharomyces cerevisiae (strain ATCC 204508 / S288c) (Baker's yeast).